The sequence spans 590 residues: Dystrobrevin-1 (590 aa).

The segment covering 1-10 has biased composition (gly residues); sequence MLWSNGGGGP. The interval 1–25 is disordered; sequence MLWSNGGGGPREPSSAPSPDHHRAM. The ZZ-type zinc finger occupies 259–315; it reads YHPVVCDACQVRSFTGFRYKCQRCANYQLCQSCFWRGRTSQNHSNEHEMKEYSSYKS. Cys264, Cys267, Cys279, Cys282, Cys288, Cys291, His301, and His305 together coordinate Zn(2+). Positions 434-508 form a coiled coil; that stretch reads SMVGDERTLI…EHLMAQLNTG (75 aa). Residues 468 to 590 form an essential for interaction with ctn-1 region; the sequence is DGLAGLRDRK…DENGVTINGF (123 aa). Positions 484–490 are essential for interaction with dys-1; sequence MFEMQQR.

Belongs to the dystrophin family. Dystrobrevin subfamily. Component of the dystrophin glycoprotein complex (DGC). Interacts with dystrophin (dys-1) and syntrophin (stn-1) to form the DGC. Interacts (via C-terminus) with ctn-1 (via N-terminus); the interaction is required for localization of the dystrophin complex and ctn-1 near dense bodies in muscle cells. As to expression, from late embryogenesis to adulthood, expressed in neurons and muscles; particularly strong in the ventral nerve cord and in muscles of the body wall, head pharyngeal, and vulva; weaker in the intestinal muscle (at protein level).

Its subcellular location is the cytoplasm. In terms of biological role, plays a role in cholinergic transmission and as a functional partner of dystrophin (dys-1), necessary for muscle maintenance. Required for localization of ctn-1 near dense bodies in muscle cells. This is Dystrobrevin-1 from Caenorhabditis elegans.